The primary structure comprises 240 residues: Pro-opiomelanocortin B (240 aa).

An N-terminal signal peptide occupies residues 1–36 (MFGTFLQNQSVRLNMVCAPWLLAVVVVCVCNPGVEG). Q37 carries the pyrrolidone carboxylic acid modification. Residue H111 is a propeptide. Residue S112 is modified to N-acetylserine; in Corticotropin. Position 124 is an isoleucine amide (I124).

The protein belongs to the POMC family. Post-translationally, specific enzymatic cleavages at paired basic residues yield the different active peptides. In terms of processing, acetylation of beta-endorphin occurs in a tissue-specific manner. As to expression, pituitary and hypothalamus of adult diploid animals.

Its subcellular location is the secreted. Stimulates the adrenal glands to release cortisol. Its function is as follows. Melanocyte-stimulating hormone alpha: Anorexigenic peptide. Increases the pigmentation of skin by increasing melanin production in melanocytes. Functionally, melanocyte-stimulating hormone beta: Increases the pigmentation of skin by increasing melanin production in melanocytes. In terms of biological role, beta-endorphin: Endogenous orexigenic opiate. Endogenous opiate. The protein is Pro-opiomelanocortin B (pomcb) of Oncorhynchus mykiss (Rainbow trout).